The chain runs to 275 residues: 2,3,4,5-tetrahydropyridine-2,6-dicarboxylate N-succinyltransferase (275 aa).

Residues R104 and D141 each contribute to the substrate site.

Belongs to the transferase hexapeptide repeat family. In terms of assembly, homotrimer.

Its subcellular location is the cytoplasm. The catalysed reaction is (S)-2,3,4,5-tetrahydrodipicolinate + succinyl-CoA + H2O = (S)-2-succinylamino-6-oxoheptanedioate + CoA. It participates in amino-acid biosynthesis; L-lysine biosynthesis via DAP pathway; LL-2,6-diaminopimelate from (S)-tetrahydrodipicolinate (succinylase route): step 1/3. This Haemophilus influenzae (strain 86-028NP) protein is 2,3,4,5-tetrahydropyridine-2,6-dicarboxylate N-succinyltransferase.